A 553-amino-acid polypeptide reads, in one-letter code: Putative transport protein ASA_0825 (553 aa).

5 consecutive transmembrane segments (helical) span residues 4–24, 29–49, 65–85, 95–115, and 158–178; these read IALSISMLSLVAVLGLWLGNW, VGLGIGGVLFGGIIVGHFAGV, FGLILFVYTIGIQVGPGFFSS, GFAALLVILGCVVAAGLHQLF, and MGYAVAYPFGICGILLTMWLV. RCK C-terminal domains follow at residues 191–276 and 279–361; these read DLFE…VLGE and ETSL…VVGN. 6 helical membrane passes run 371–391, 403–425, 439–459, 465–485, 493–513, and 533–553; these read MLPVFIGIGLGVLLGSIPFYL, AGGPLVVALILSRIGSIGKLYWF, IVLFLAVVGFKSGAGFVDTLI, AWMMYGMAITLIPLLVVGVLA, YLTLCGLLAGSMTDPPALAFA, and LVMFLRIISPQLLAILLWAGV.

It belongs to the AAE transporter (TC 2.A.81) family. YidE subfamily.

Its subcellular location is the cell membrane. The polypeptide is Putative transport protein ASA_0825 (Aeromonas salmonicida (strain A449)).